Consider the following 680-residue polypeptide: Structure-specific endonuclease subunit SLX4 (680 aa).

Disordered stretches follow at residues 15–92, 141–183, and 450–490; these read EVAK…EPVV, ESSS…STQQ, and LGSG…ATRL. Positions 22 to 33 are enriched in acidic residues; sequence DSDEPIIDEDDL. Residues 60–86 are compositionally biased toward basic and acidic residues; the sequence is NNSKDTFKETPLELVDKEEAIEDKAPN. Basic residues predominate over residues 156–174; that stretch reads LKSKKITKPKLTKTSKRTK. The span at 473–490 shows a compositional bias: polar residues; sequence TVISRSPQSTRTPQATRL.

The protein belongs to the SLX4 family. In terms of assembly, forms a heterodimer with SLX1. Post-translationally, phosphorylated in response to DNA damage.

It localises to the nucleus. Functionally, regulatory subunit of the SLX1-SLX4 structure-specific endonuclease that resolves DNA secondary structures generated during DNA repair and recombination. Has endonuclease activity towards branched DNA substrates, introducing single-strand cuts in duplex DNA close to junctions with ss-DNA. The protein is Structure-specific endonuclease subunit SLX4 of Vanderwaltozyma polyspora (strain ATCC 22028 / DSM 70294 / BCRC 21397 / CBS 2163 / NBRC 10782 / NRRL Y-8283 / UCD 57-17) (Kluyveromyces polysporus).